The sequence spans 639 residues: 1-deoxy-D-xylulose-5-phosphate synthase (639 aa).

Thiamine diphosphate contacts are provided by residues histidine 79 and 120–122 (AHS). Residue aspartate 151 participates in Mg(2+) binding. Thiamine diphosphate is bound by residues 152–153 (GA), asparagine 180, tyrosine 289, and glutamate 371. Asparagine 180 contacts Mg(2+).

This sequence belongs to the transketolase family. DXPS subfamily. In terms of assembly, homodimer. Mg(2+) is required as a cofactor. Thiamine diphosphate serves as cofactor.

The catalysed reaction is D-glyceraldehyde 3-phosphate + pyruvate + H(+) = 1-deoxy-D-xylulose 5-phosphate + CO2. It functions in the pathway metabolic intermediate biosynthesis; 1-deoxy-D-xylulose 5-phosphate biosynthesis; 1-deoxy-D-xylulose 5-phosphate from D-glyceraldehyde 3-phosphate and pyruvate: step 1/1. Catalyzes the acyloin condensation reaction between C atoms 2 and 3 of pyruvate and glyceraldehyde 3-phosphate to yield 1-deoxy-D-xylulose-5-phosphate (DXP). The chain is 1-deoxy-D-xylulose-5-phosphate synthase from Rhizorhabdus wittichii (strain DSM 6014 / CCUG 31198 / JCM 15750 / NBRC 105917 / EY 4224 / RW1) (Sphingomonas wittichii).